The sequence spans 98 residues: EKC/KEOPS complex subunit GON7 (98 aa).

M1 carries the N-acetylmethionine modification. The tract at residues 55 to 98 (DAQGLAEDPDDALDGDDEDDAEDENNSGRTNSDGPSAKRPKPAS) is disordered. The span at 61-79 (EDPDDALDGDDEDDAEDEN) shows a compositional bias: acidic residues.

In terms of assembly, component of the EKC/KEOPS complex composed of at least GON7, TP53RK, TPRKB, OSGEP and LAGE3; the whole complex dimerizes.

The protein resides in the nucleus. Its function is as follows. Component of the EKC/KEOPS complex that is required for the formation of a threonylcarbamoyl group on adenosine at position 37 (t(6)A37) in tRNAs that read codons beginning with adenine. The complex is probably involved in the transfer of the threonylcarbamoyl moiety of threonylcarbamoyl-AMP (TC-AMP) to the N6 group of A37. GON7 plays a supporting role to the catalytic subunit OSGEP in the complex. The polypeptide is EKC/KEOPS complex subunit GON7 (Mus musculus (Mouse)).